We begin with the raw amino-acid sequence, 207 residues long: uncharacterized protein (207 aa).

Active-site residues include Arg-80, Glu-88, and Arg-148.

The protein belongs to the thermonuclease family.

This is an uncharacterized protein from Methanocaldococcus jannaschii (strain ATCC 43067 / DSM 2661 / JAL-1 / JCM 10045 / NBRC 100440) (Methanococcus jannaschii).